Reading from the N-terminus, the 115-residue chain is Nucleoid-associated protein NATL1_00191 (115 aa).

The interval 89-115 (STSTMKERMEDLTGGFKLNLPGMGEES) is disordered.

It belongs to the YbaB/EbfC family. As to quaternary structure, homodimer.

It is found in the cytoplasm. The protein localises to the nucleoid. Binds to DNA and alters its conformation. May be involved in regulation of gene expression, nucleoid organization and DNA protection. This chain is Nucleoid-associated protein NATL1_00191, found in Prochlorococcus marinus (strain NATL1A).